Consider the following 237-residue polypeptide: Opacity protein opA57 (237 aa).

Ala1 is a signal peptide.

Belongs to the opacity porin family.

It localises to the cell outer membrane. Implicated in a number of adherence functions. OPA proteins are implicated in pathogenesis and are subject to phase variation. The chain is Opacity protein opA57 (opaK) from Neisseria gonorrhoeae.